Consider the following 120-residue polypeptide: Putative 15 kDa capsid protein (120 aa).

It localises to the virion. The protein is Putative 15 kDa capsid protein (P15) of Orgyia pseudotsugata (Douglas-fir tussock moth).